We begin with the raw amino-acid sequence, 743 residues long: Probable TonB-dependent siderophore receptor PiuA (743 aa).

Residues 1-28 (MSLIRTRKKIVSSAIASSLSMIATTAMA) form the signal peptide. Residues 61 to 167 (PLLDTPKSVS…VGGSINMISK (107 aa)) enclose the TBDR plug domain. The region spanning 172–743 (GDFLEGSVAA…SAVLAVNFKY (572 aa)) is the TBDR beta-barrel domain. Cystine bridges form between C408–C416 and C627–C632.

The protein belongs to the TonB-dependent receptor family.

It is found in the cell outer membrane. Probably involved in the initial step of iron uptake by binding iron chelating siderophores, thereby allowing extraction of iron from the environment. May bind the siderophore, ferric enterobactin, with micromolar affinity. This chain is Probable TonB-dependent siderophore receptor PiuA, found in Acinetobacter baumannii (strain ATCC 19606 / DSM 30007 / JCM 6841 / CCUG 19606 / CIP 70.34 / NBRC 109757 / NCIMB 12457 / NCTC 12156 / 81).